A 390-amino-acid polypeptide reads, in one-letter code: Exodeoxyribonuclease 7 large subunit (390 aa).

This sequence belongs to the XseA family. As to quaternary structure, heterooligomer composed of large and small subunits.

It localises to the cytoplasm. The enzyme catalyses Exonucleolytic cleavage in either 5'- to 3'- or 3'- to 5'-direction to yield nucleoside 5'-phosphates.. Bidirectionally degrades single-stranded DNA into large acid-insoluble oligonucleotides, which are then degraded further into small acid-soluble oligonucleotides. This chain is Exodeoxyribonuclease 7 large subunit, found in Synechococcus sp. (strain CC9311).